The chain runs to 166 residues: Large ribosomal subunit protein uL10 (166 aa).

Belongs to the universal ribosomal protein uL10 family. In terms of assembly, part of the ribosomal stalk of the 50S ribosomal subunit. The N-terminus interacts with L11 and the large rRNA to form the base of the stalk. The C-terminus forms an elongated spine to which L12 dimers bind in a sequential fashion forming a multimeric L10(L12)X complex.

Functionally, forms part of the ribosomal stalk, playing a central role in the interaction of the ribosome with GTP-bound translation factors. The polypeptide is Large ribosomal subunit protein uL10 (Bacillus pumilus (strain SAFR-032)).